Reading from the N-terminus, the 409-residue chain is Mitochondrial protein import protein MAS5 (409 aa).

The necessary for HAP1 repression in the absence of heme stretch occupies residues 1 to 172; the sequence is MVKETKFYDI…NGQGIKFVTR (172 aa). Residues 4-72 enclose the J domain; sequence ETKFYDILGV…RDIYDQFGED (69 aa). Substrate-binding positions include Ile-116 and 135 to 137; that span reads LAL. A CR-type zinc finger spans residues 130-213; the sequence is GRTAKLALNK…CNGKKVENER (84 aa). Zn(2+) is bound by residues Cys-143, Cys-146, Cys-159, Cys-162, Cys-185, and Cys-188. CXXCXGXG motif repeat units lie at residues 143–150, 159–166, and 185–192; these read CKECEGRG, CTSCNGQG, and CDVCHGTG. Residue Lys-198 forms a Glycyl lysine isopeptide (Lys-Gly) (interchain with G-Cter in ubiquitin) linkage. Residues Cys-201 and Cys-204 each coordinate Zn(2+). The stretch at 201 to 208 is one CXXCXGXG motif repeat; the sequence is CKSCNGKK. Substrate is bound by residues 215 to 216 and 247 to 249; these read IL and VVF. The interval 382 to 409 is disordered; sequence RTRASRGGANYDSDEEEQGGEGVQCASQ. Cys-406 carries the post-translational modification Cysteine methyl ester. Cys-406 carries the S-farnesyl cysteine lipid modification. Positions 407–409 are cleaved as a propeptide — removed in mature form; sequence ASQ.

In terms of assembly, homodimer. Interacts with HAP1. Component of the HMC including HAP1, SRO9 and YDJ1.

Its subcellular location is the cytoplasm. The protein resides in the perinuclear region. Functionally, probably involved in mitochondrial protein import. Is also required for efficient translocation of pre-pro-alpha-factor. Involved in heme regulation of HAP1, as a component of the high-molecular-weight (HMC) complex. The sequence is that of Mitochondrial protein import protein MAS5 (YDJ1) from Saccharomyces cerevisiae (strain ATCC 204508 / S288c) (Baker's yeast).